The sequence spans 497 residues: Indoleacetaldoxime dehydratase (497 aa).

The helical transmembrane segment at 2–20 (EMILSISLCLTTLITLLLL) threads the bilayer. Cys439 contributes to the heme binding site.

Belongs to the cytochrome P450 family.

Its subcellular location is the membrane. The enzyme catalyses (E)-(indol-3-yl)acetaldehyde oxime = (indol-3-yl)acetonitrile + H2O. Functionally, involved in the biosynthesis of the indole-derived phytoalexin camalexin. Catalyzes the conversion of indole-3-acetaldoxime to indole-3-acetonitrile. Required for resistance to A.brassicicola and B.cinerea. The sequence is that of Indoleacetaldoxime dehydratase (CYP71A13) from Arabidopsis thaliana (Mouse-ear cress).